Reading from the N-terminus, the 1839-residue chain is DNA-directed RNA polymerase II subunit RPB1 (1839 aa).

Zn(2+) is bound by residues cysteine 66, cysteine 69, cysteine 76, histidine 79, cysteine 106, cysteine 109, and cysteine 147. The disordered stretch occupies residues aspartate 152–alanine 174. Positions valine 156–lysine 166 are enriched in basic and acidic residues. Zn(2+) is bound at residue cysteine 172. A DNA-binding region spans residues threonine 326–glutamate 397. Residues aspartate 495, aspartate 497, and aspartate 499 each contribute to the Mg(2+) site. The tract at residues glycine 785–proline 795 is alpha-amanitin binding. Residues proline 829–glutamate 841 are bridging helix. Low complexity predominate over residues proline 1538–tyrosine 1726. The interval proline 1538–proline 1839 is disordered. A run of 27 repeats spans residues tyrosine 1544–glycine 1550, tyrosine 1551–glycine 1557, tyrosine 1558–glycine 1564, tyrosine 1565–glycine 1571, tyrosine 1572–threonine 1578, tyrosine 1579–glycine 1585, tyrosine 1586–alanine 1592, tyrosine 1593–serine 1599, tyrosine 1600–serine 1606, tyrosine 1607–serine 1613, tyrosine 1614–serine 1620, tyrosine 1621–serine 1627, tyrosine 1628–serine 1634, tyrosine 1635–alanine 1641, tyrosine 1642–alanine 1648, tyrosine 1649–alanine 1655, tyrosine 1656–serine 1662, tyrosine 1663–serine 1669, tyrosine 1670–serine 1676, tyrosine 1677–serine 1683, tyrosine 1684–serine 1690, tyrosine 1691–alanine 1697, tyrosine 1698–glycine 1704, tyrosine 1705–serine 1711, tyrosine 1712–serine 1718, tyrosine 1719–serine 1725, and tyrosine 1726–lysine 1732. The interval tyrosine 1544–glycine 1813 is C-terminal domain (CTD); 37 X 7 AA tandem approximate repeats of Y-[GNS]-P-[QST]-[LNS]-[APT]-[AGKNRSTY]. A compositionally biased stretch (polar residues) spans asparagine 1727 to arginine 1745. One copy of the 28; approximate repeat lies at tyrosine 1733–alanine 1738. 6 repeat units span residues tyrosine 1739 to arginine 1745, tyrosine 1752 to asparagine 1758, tyrosine 1759 to serine 1765, tyrosine 1766 to serine 1772, tyrosine 1773 to threonine 1779, and tyrosine 1780 to tyrosine 1786. Over residues serine 1747 to alanine 1798 the composition is skewed to low complexity. The stretch at tyrosine 1794 to glycine 1799 is one 35; approximate repeat. 2 consecutive repeat copies span residues tyrosine 1800–glycine 1806 and tyrosine 1807–glycine 1813. The span at histidine 1818–proline 1839 shows a compositional bias: basic and acidic residues.

Belongs to the RNA polymerase beta' chain family. In terms of assembly, component of the RNA polymerase II (Pol II) complex consisting of at least 12 subunits. Interacts with RDM1. Interacts (via CTD) with PRP40A, PRP40B, PRP40C and CYP59. Interacts with MEE12/CCG1 and MEE14/CBP1. Binds (via CTD) to ATX1, especially when phosphorylated on 'Ser-5' of the heptapeptide repeat. The tandem 7 residues repeats in the C-terminal domain (CTD) can be highly phosphorylated. The phosphorylation activates Pol II. Phosphorylation occurs mainly at residues 'Ser-2' and 'Ser-5' of the heptapeptide repeat. The phosphorylation state is believed to result from the balanced action of site-specific CTD kinases and phosphatase, and a 'CTD code' that specifies the position of Pol II within the transcription cycle has been proposed. ATX1 seems to regulate phosphorylation statment. 'Ser-2' and 'Ser-5' phosphorylation are repressed by flavopiridol (Flap) and seliciclib (Selic), inhibitors of CDK7 and CDK9.

Its subcellular location is the nucleus. The enzyme catalyses RNA(n) + a ribonucleoside 5'-triphosphate = RNA(n+1) + diphosphate. Functionally, DNA-dependent RNA polymerase catalyzes the transcription of DNA into RNA using the four ribonucleoside triphosphates as substrates. Largest and catalytic component of RNA polymerase II which synthesizes mRNA precursors and many functional non-coding RNAs. Forms the polymerase active center together with the second largest subunit. Pol II is the central component of the basal RNA polymerase II transcription machinery. It is composed of mobile elements that move relative to each other. NRPB1 is part of the core element with the central large cleft, the clamp element that moves to open and close the cleft and the jaws that are thought to grab the incoming DNA template. At the start of transcription, a single-stranded DNA template strand of the promoter is positioned within the central active site cleft of Pol II. A bridging helix emanates from NRPB1 and crosses the cleft near the catalytic site and is thought to promote translocation of Pol II by acting as a ratchet that moves the RNA-DNA hybrid through the active site by switching from straight to bent conformations at each step of nucleotide addition. During transcription elongation, Pol II moves on the template as the transcript elongates. Elongation is influenced by the phosphorylation status of the C-terminal domain (CTD) of Pol II largest subunit (NRPB1), which serves as a platform for assembly of factors that regulate transcription initiation, elongation, termination and mRNA processing. The sequence is that of DNA-directed RNA polymerase II subunit RPB1 from Arabidopsis thaliana (Mouse-ear cress).